The following is a 279-amino-acid chain: 3-methyl-2-oxobutanoate hydroxymethyltransferase (279 aa).

Residues Asp43 and Asp82 each contribute to the Mg(2+) site. 3-methyl-2-oxobutanoate contacts are provided by residues 43–44, Asp82, and Lys112; that span reads DS. Glu114 is a Mg(2+) binding site. The active-site Proton acceptor is Glu181.

Belongs to the PanB family. As to quaternary structure, homodecamer; pentamer of dimers. Requires Mg(2+) as cofactor.

It is found in the cytoplasm. It catalyses the reaction 3-methyl-2-oxobutanoate + (6R)-5,10-methylene-5,6,7,8-tetrahydrofolate + H2O = 2-dehydropantoate + (6S)-5,6,7,8-tetrahydrofolate. The protein operates within cofactor biosynthesis; (R)-pantothenate biosynthesis; (R)-pantoate from 3-methyl-2-oxobutanoate: step 1/2. Functionally, catalyzes the reversible reaction in which hydroxymethyl group from 5,10-methylenetetrahydrofolate is transferred onto alpha-ketoisovalerate to form ketopantoate. The polypeptide is 3-methyl-2-oxobutanoate hydroxymethyltransferase (Geobacillus sp. (strain WCH70)).